The primary structure comprises 308 residues: Serine/threonine-protein phosphatase PP1 (308 aa).

Positions 64, 66, 92, and 124 each coordinate Mn(2+). Catalysis depends on His125, which acts as the Proton donor. The Mn(2+) site is built by His173 and His248.

This sequence belongs to the PPP phosphatase family. PP-1 subfamily. It depends on Mn(2+) as a cofactor.

The protein localises to the cytoplasm. The enzyme catalyses O-phospho-L-seryl-[protein] + H2O = L-seryl-[protein] + phosphate. It catalyses the reaction O-phospho-L-threonyl-[protein] + H2O = L-threonyl-[protein] + phosphate. This chain is Serine/threonine-protein phosphatase PP1 (pph-3), found in Neurospora crassa (strain ATCC 24698 / 74-OR23-1A / CBS 708.71 / DSM 1257 / FGSC 987).